A 398-amino-acid polypeptide reads, in one-letter code: Argininosuccinate synthase (398 aa).

8–16 (AYSGGLDTS) serves as a coordination point for ATP. Residue Y87 participates in L-citrulline binding. G117 contributes to the ATP binding site. L-aspartate-binding residues include T119, N123, and D124. N123 is an L-citrulline binding site. 4 residues coordinate L-citrulline: R127, S175, E260, and Y272.

Belongs to the argininosuccinate synthase family. Type 1 subfamily. As to quaternary structure, homotetramer.

Its subcellular location is the cytoplasm. It catalyses the reaction L-citrulline + L-aspartate + ATP = 2-(N(omega)-L-arginino)succinate + AMP + diphosphate + H(+). Its pathway is amino-acid biosynthesis; L-arginine biosynthesis; L-arginine from L-ornithine and carbamoyl phosphate: step 2/3. The protein is Argininosuccinate synthase of Mycobacterium tuberculosis (strain ATCC 25618 / H37Rv).